Reading from the N-terminus, the 209-residue chain is Somatotropin (209 aa).

Positions 1–22 (MGQVFLLMPVLLVAGYLSLGAA) are cleaved as a signal peptide. Residue H38 coordinates Zn(2+). C71 and C182 are joined by a disulfide. E191 provides a ligand contact to Zn(2+). Cysteines 199 and 207 form a disulfide.

It belongs to the somatotropin/prolactin family.

It is found in the secreted. In terms of biological role, growth hormone plays an important role in growth control and is involved in the regulation of several anabolic processes. Implicated as an osmoregulatory substance important for seawater adaptation. The protein is Somatotropin (gh) of Esox lucius (Northern pike).